The primary structure comprises 117 residues: Cuticular protein 47Eg (117 aa).

The N-terminal stretch at 1–16 is a signal peptide; it reads MKFFIAFACLLAVALA. The 67-residue stretch at 31–97 folds into the Chitin-binding type R&amp;R domain; the sequence is VDGFAYAVEL…SANPPLPTPP (67 aa).

In terms of biological role, component of the larval cuticle. In Drosophila melanogaster (Fruit fly), this protein is Cuticular protein 47Eg (Cpr47Eg).